The chain runs to 218 residues: Zinc finger BED domain-containing protein 2 (218 aa).

A compositionally biased stretch (acidic residues) spans 1–11 (MMRREDEEEEG). Residues 1-24 (MMRREDEEEEGTMMKAKGDLEMKE) are disordered. The BED-type zinc-finger motif lies at 52 to 113 (TRFSEAWEYF…SMHREELEKS (62 aa)). Positions 78, 81, 101, and 106 each coordinate Zn(2+). Residues 104–137 (SMHREELEKSGHGQAGQRQDPRPHGPQLPTGIEG) form a disordered region. The span at 105 to 114 (MHREELEKSG) shows a compositional bias: basic and acidic residues.

In terms of tissue distribution, expressed in keratinocytes.

The protein localises to the nucleus. Its function is as follows. Transcriptional regulator which has intrinsic repressor activity and which competes with the transcriptional activator IRF1 for binding to the 5'-[CA]GAA[AC]C[CT]-3' consensus sequence in gene promoters. May thereby play a role in keratinocyte differentiation. This chain is Zinc finger BED domain-containing protein 2 (ZBED2), found in Homo sapiens (Human).